Consider the following 428-residue polypeptide: MLKPEWSRYIDLLHKEVVPALGCTEPVAVALAAAHAAATLGRTPDRIEVKVSGNLLKNGMGVGVPGTGTTGMNIAAAVGALGGDPQRGLEVLAGLTPEQAEAGRQMVAEGRVDVSVAQGAPLLYAEVTVTGGGHTARSVLVHEHSNIVRLERDGETVFSVPVQDLSQGGVEEKWPLTMAAIHEFATQAPYDAIAFILEAARLNEAIAVEGLAREYGLKVGRTIDENIRKHLMSDDVSTLAVKLTAAASDARMAGVSLPVMSNSGSGNQGITCTMPVVAFAKRLESSDEELARALIMSHLTSIHMKHRLGRLSALCGATVAAAAAGCGIVLLMGGGMEQVDRTIRNMVGNVAGMICDGAKTGCAMKVASAVSAGVQSAMLAMDGIGIDRREGIVEDDIELCIANLARLGSDGMQEADRVVLDIMVSKKP.

Belongs to the UPF0597 family.

The polypeptide is UPF0597 protein Dde_0807 (Oleidesulfovibrio alaskensis (strain ATCC BAA-1058 / DSM 17464 / G20) (Desulfovibrio alaskensis)).